Consider the following 201-residue polypeptide: Small ribosomal subunit protein uS4 (201 aa).

The S4 RNA-binding domain occupies serine 91–glutamate 151.

It belongs to the universal ribosomal protein uS4 family. In terms of assembly, part of the 30S ribosomal subunit. Contacts protein S5. The interaction surface between S4 and S5 is involved in control of translational fidelity.

In terms of biological role, one of the primary rRNA binding proteins, it binds directly to 16S rRNA where it nucleates assembly of the body of the 30S subunit. Functionally, with S5 and S12 plays an important role in translational accuracy. The polypeptide is Small ribosomal subunit protein uS4 (Corynebacterium diphtheriae (strain ATCC 700971 / NCTC 13129 / Biotype gravis)).